A 415-amino-acid chain; its full sequence is Multidrug resistance protein MdtA (415 aa).

Positions 1-21 are cleaved as a signal peptide; that stretch reads MKGSYKSRWVIVIVVVIAAIA. Disordered stretches follow at residues 32 to 60 and 392 to 415; these read SRSA…GPLA and EAQS…GARS. Basic and acidic residues predominate over residues 399 to 415; sequence PEEKATSREYAKKGARS.

Belongs to the membrane fusion protein (MFP) (TC 8.A.1) family. As to quaternary structure, part of a tripartite efflux system composed of MdtA, MdtB and MdtC.

It is found in the cell inner membrane. The MdtABC tripartite complex confers resistance against novobiocin and deoxycholate. In Escherichia coli (strain 55989 / EAEC), this protein is Multidrug resistance protein MdtA.